We begin with the raw amino-acid sequence, 539 residues long: Chaperonin GroEL (539 aa).

Residues 30-33, 87-91, Gly414, 479-481, and Asp495 each bind ATP; these read TLGP, DGTTT, and DAL.

It belongs to the chaperonin (HSP60) family. Forms a cylinder of 14 subunits composed of two heptameric rings stacked back-to-back. Interacts with the co-chaperonin GroES.

It is found in the cytoplasm. It carries out the reaction ATP + H2O + a folded polypeptide = ADP + phosphate + an unfolded polypeptide.. Its function is as follows. Together with its co-chaperonin GroES, plays an essential role in assisting protein folding. The GroEL-GroES system forms a nano-cage that allows encapsulation of the non-native substrate proteins and provides a physical environment optimized to promote and accelerate protein folding. This chain is Chaperonin GroEL, found in Caldicellulosiruptor bescii (strain ATCC BAA-1888 / DSM 6725 / KCTC 15123 / Z-1320) (Anaerocellum thermophilum).